Reading from the N-terminus, the 328-residue chain is UPF0194 membrane protein YPA_1093 (328 aa).

The signal sequence occupies residues 1-22 (MNRKKIIVAAVIVALLATLAYG). Coiled-coil stretches lie at residues 80–109 (YLNA…REEE) and 141–209 (KAVS…ILLA).

The protein belongs to the UPF0194 family.

It is found in the periplasm. This Yersinia pestis bv. Antiqua (strain Antiqua) protein is UPF0194 membrane protein YPA_1093.